The sequence spans 393 residues: Acetylornithine aminotransferase 1 (393 aa).

Arginine 131 contributes to the N(2)-acetyl-L-ornithine binding site. 215–218 is a binding site for pyridoxal 5'-phosphate; sequence DEVQ. Lysine 244 is subject to N6-(pyridoxal phosphate)lysine. Threonine 272 contributes to the N(2)-acetyl-L-ornithine binding site. Pyridoxal 5'-phosphate is bound at residue threonine 273.

It belongs to the class-III pyridoxal-phosphate-dependent aminotransferase family. ArgD subfamily. Homodimer. It depends on pyridoxal 5'-phosphate as a cofactor.

It localises to the cytoplasm. The enzyme catalyses N(2)-acetyl-L-ornithine + 2-oxoglutarate = N-acetyl-L-glutamate 5-semialdehyde + L-glutamate. It participates in amino-acid biosynthesis; L-arginine biosynthesis; N(2)-acetyl-L-ornithine from L-glutamate: step 4/4. In Bordetella parapertussis (strain 12822 / ATCC BAA-587 / NCTC 13253), this protein is Acetylornithine aminotransferase 1.